The following is a 225-amino-acid chain: Uracil-DNA glycosylase (225 aa).

The active-site Proton acceptor is D64.

The protein belongs to the uracil-DNA glycosylase (UDG) superfamily. UNG family.

It localises to the cytoplasm. It catalyses the reaction Hydrolyzes single-stranded DNA or mismatched double-stranded DNA and polynucleotides, releasing free uracil.. In terms of biological role, excises uracil residues from the DNA which can arise as a result of misincorporation of dUMP residues by DNA polymerase or due to deamination of cytosine. This chain is Uracil-DNA glycosylase, found in Lachnoclostridium phytofermentans (strain ATCC 700394 / DSM 18823 / ISDg) (Clostridium phytofermentans).